A 204-amino-acid chain; its full sequence is CASP-like protein 1B2 (204 aa).

Residues 1–28 (MASKGEEKPELVGSKQGIVSVTKAKHDQ) lie on the Cytoplasmic side of the membrane. A helical transmembrane segment spans residues 29–49 (IVLVLRVVAFLATASATIVMG). The Extracellular portion of the chain corresponds to 50-80 (LNQETKTLLVGTIGTTPIRATLKAKFQHTPA). A helical membrane pass occupies residues 81 to 101 (FVFFVVANGLASVYNLVMLGV). The Cytoplasmic segment spans residues 102–114 (DVFGRKLDCKGLR). A helical membrane pass occupies residues 115-135 (LVIISILDMVIVAVVAAGASS). Topologically, residues 136–168 (AAFMAELGKNGNSHAKWNKICDKFESFCHQGGG) are extracellular. A helical membrane pass occupies residues 169–189 (ALIPSFIALLLLFLISAISII). Over 190-204 (TLHNQKLTSPHATTP) the chain is Cytoplasmic.

The protein belongs to the Casparian strip membrane proteins (CASP) family. In terms of assembly, homodimer and heterodimers.

The protein resides in the cell membrane. This is CASP-like protein 1B2 from Vitis vinifera (Grape).